We begin with the raw amino-acid sequence, 975 residues long: Leucine-zipper-like transcriptional regulator 1 homolog (975 aa).

The segment covering 16 to 32 (RGGGGGGCGGGGAGGSA) has biased composition (gly residues). Disordered regions lie at residues 16–41 (RGGG…TSGS) and 158–186 (MSSS…SCSS). Residues 174 to 186 (ASSSHPPGSSCSS) show a composition bias toward low complexity. 6 Kelch repeats span residues 263-312 (AMFV…VAGS), 314-369 (MFIF…VYDN), 370-417 (KMWI…PVAV), 421-467 (AMYV…PSRR), 478-524 (FLYV…FHAS), and 530-581 (AMYI…FIVG). BTB domains are found at residues 574–670 (CDIQ…DLKD) and 801–870 (CDIS…KMPP).

It belongs to the LZTR1 family. In terms of assembly, component of some BCR (BTB-CUL3-RBX1) E3 ubiquitin-protein ligase complex. Expressed in Rdl-expressing neurons of the mushroom body, the neurons projecting to the LC9 optic glomerulus and in a neuronal cluster near the subesophageal ganglion (at protein level).

It functions in the pathway protein modification; protein ubiquitination. In terms of biological role, inhibitor of Ras signaling. Acts as a substrate-specific adapter of a BCR (BTB-CUL3-RBX1) E3 ubiquitin-protein ligase complex that mediates ubiquitination of Ras. Together with Nf1, plays an important role for normal sleep behavior, mainly during the night. Might affect sleep by modulating GABA signaling in Rdl-expressing neurons. Might play a role in the regulation of brain glycogen metabolism and organismal levels of triglycerides. In Drosophila melanogaster (Fruit fly), this protein is Leucine-zipper-like transcriptional regulator 1 homolog.